Here is a 47-residue protein sequence, read N- to C-terminus: Lysis protein for colicins E2 and E3 (47 aa).

A signal peptide spans 1–19; that stretch reads MKKITGIILLLLAVIILSA. A lipid anchor (N-palmitoyl cysteine) is attached at cysteine 20. Residue cysteine 20 is the site of S-diacylglycerol cysteine attachment.

The protein resides in the cell outer membrane. Lysis proteins are required for both colicin release and partial cell lysis. This chain is Lysis protein for colicins E2 and E3 (hic), found in Escherichia coli.